Reading from the N-terminus, the 617-residue chain is Dihydroxy-acid dehydratase (617 aa).

Mg(2+) is bound at residue aspartate 82. Residue cysteine 123 coordinates [2Fe-2S] cluster. Mg(2+)-binding residues include aspartate 124 and lysine 125. Position 125 is an N6-carboxylysine (lysine 125). Cysteine 197 contributes to the [2Fe-2S] cluster binding site. Residue glutamate 497 coordinates Mg(2+). The active-site Proton acceptor is the serine 523.

The protein belongs to the IlvD/Edd family. Homodimer. The cofactor is [2Fe-2S] cluster. Mg(2+) serves as cofactor.

It catalyses the reaction (2R)-2,3-dihydroxy-3-methylbutanoate = 3-methyl-2-oxobutanoate + H2O. It carries out the reaction (2R,3R)-2,3-dihydroxy-3-methylpentanoate = (S)-3-methyl-2-oxopentanoate + H2O. The protein operates within amino-acid biosynthesis; L-isoleucine biosynthesis; L-isoleucine from 2-oxobutanoate: step 3/4. It participates in amino-acid biosynthesis; L-valine biosynthesis; L-valine from pyruvate: step 3/4. In terms of biological role, functions in the biosynthesis of branched-chain amino acids. Catalyzes the dehydration of (2R,3R)-2,3-dihydroxy-3-methylpentanoate (2,3-dihydroxy-3-methylvalerate) into 2-oxo-3-methylpentanoate (2-oxo-3-methylvalerate) and of (2R)-2,3-dihydroxy-3-methylbutanoate (2,3-dihydroxyisovalerate) into 2-oxo-3-methylbutanoate (2-oxoisovalerate), the penultimate precursor to L-isoleucine and L-valine, respectively. This Streptomyces coelicolor (strain ATCC BAA-471 / A3(2) / M145) protein is Dihydroxy-acid dehydratase.